A 139-amino-acid polypeptide reads, in one-letter code: Toxin FitB (139 aa).

The 122-residue stretch at 2-123 (ILLDTNVISE…HSLTVATRDT (122 aa)) folds into the PINc domain. Residues D5 and D104 each contribute to the Mg(2+) site.

It belongs to the PINc/VapC protein family. Forms a heterodimer with FitA, 4 FitAB heterodimers form a complex that binds to promoter DNA. The complex is also seen in solution. This protein does not actually contact DNA. Mg(2+) serves as cofactor.

Its function is as follows. Toxic component of a type II toxin-antitoxin (TA) system. Plays a role in the speed with which bacteria traverse human epithelial cells; disruption of the locus increases the speed of trafficking about 2-4-fold. FitAB binds to its own promoter better than FitA alone. The expected nuclease activity was not observed for the FitAB complex, perhaps because FitA (the antitoxin) prevents metal binding and thus catalysis by FitB. The sequence is that of Toxin FitB (fitB) from Neisseria gonorrhoeae (strain ATCC 700825 / FA 1090).